We begin with the raw amino-acid sequence, 201 residues long: Ribonuclease HII (201 aa).

Residues Asn-14–Glu-201 form the RNase H type-2 domain. 3 residues coordinate a divalent metal cation: Asp-20, Glu-21, and Asp-112.

It belongs to the RNase HII family. Mn(2+) serves as cofactor. It depends on Mg(2+) as a cofactor.

The protein localises to the cytoplasm. The catalysed reaction is Endonucleolytic cleavage to 5'-phosphomonoester.. Endonuclease that specifically degrades the RNA of RNA-DNA hybrids. The sequence is that of Ribonuclease HII from Photobacterium profundum (strain SS9).